The sequence spans 138 residues: uncharacterized protein (138 aa).

This is an uncharacterized protein from Saccharomyces cerevisiae (strain ATCC 204508 / S288c) (Baker's yeast).